Reading from the N-terminus, the 313-residue chain is Homoserine O-succinyltransferase (313 aa).

The Acyl-thioester intermediate role is filled by cysteine 142. Substrate is bound by residues lysine 163 and serine 192. Catalysis depends on histidine 235, which acts as the Proton acceptor. The active site involves glutamate 237. Arginine 249 lines the substrate pocket.

This sequence belongs to the MetA family.

It localises to the cytoplasm. It catalyses the reaction L-homoserine + succinyl-CoA = O-succinyl-L-homoserine + CoA. It functions in the pathway amino-acid biosynthesis; L-methionine biosynthesis via de novo pathway; O-succinyl-L-homoserine from L-homoserine: step 1/1. Its function is as follows. Transfers a succinyl group from succinyl-CoA to L-homoserine, forming succinyl-L-homoserine. The polypeptide is Homoserine O-succinyltransferase (Shewanella sp. (strain MR-4)).